A 119-amino-acid polypeptide reads, in one-letter code: DNA-binding protein MmarC7_1157 (119 aa).

A compositionally biased stretch (basic and acidic residues) spans 1 to 12 (MNPEEIRQRRLQ). The segment at 1-37 (MNPEEIRQRRLQEMQAKAQEQGAANDPEAQRQAQEQQ) is disordered.

The protein belongs to the PDCD5 family.

The sequence is that of DNA-binding protein MmarC7_1157 from Methanococcus maripaludis (strain C7 / ATCC BAA-1331).